Consider the following 101-residue polypeptide: ATP synthase subunit c (101 aa).

A run of 2 helical transmembrane segments spans residues 28-48 (SVVAAGVGLGLAALGGAVGMG) and 72-92 (MFIALAMIEAQVIYTLVIALI).

Belongs to the ATPase C chain family. F-type ATPases have 2 components, F(1) - the catalytic core - and F(0) - the membrane proton channel. F(1) has five subunits: alpha(3), beta(3), gamma(1), delta(1), epsilon(1). F(0) has three main subunits: a(1), b(2) and c(10-14). The alpha and beta chains form an alternating ring which encloses part of the gamma chain. F(1) is attached to F(0) by a central stalk formed by the gamma and epsilon chains, while a peripheral stalk is formed by the delta and b chains.

The protein resides in the cell inner membrane. Functionally, f(1)F(0) ATP synthase produces ATP from ADP in the presence of a proton or sodium gradient. F-type ATPases consist of two structural domains, F(1) containing the extramembraneous catalytic core and F(0) containing the membrane proton channel, linked together by a central stalk and a peripheral stalk. During catalysis, ATP synthesis in the catalytic domain of F(1) is coupled via a rotary mechanism of the central stalk subunits to proton translocation. In terms of biological role, key component of the F(0) channel; it plays a direct role in translocation across the membrane. A homomeric c-ring of between 10-14 subunits forms the central stalk rotor element with the F(1) delta and epsilon subunits. The polypeptide is ATP synthase subunit c (Sulfurovum sp. (strain NBC37-1)).